The chain runs to 489 residues: Cobyric acid synthase (489 aa).

The GATase cobBQ-type domain maps to 247-439 (ALKVVVPVLP…IHGVFDEPAA (193 aa)). Residue C328 is the Nucleophile of the active site. Residue H431 is part of the active site.

The protein belongs to the CobB/CobQ family. CobQ subfamily.

Its pathway is cofactor biosynthesis; adenosylcobalamin biosynthesis. Functionally, catalyzes amidations at positions B, D, E, and G on adenosylcobyrinic A,C-diamide. NH(2) groups are provided by glutamine, and one molecule of ATP is hydrogenolyzed for each amidation. The chain is Cobyric acid synthase from Marinobacter nauticus (strain ATCC 700491 / DSM 11845 / VT8) (Marinobacter aquaeolei).